Consider the following 333-residue polypeptide: Holliday junction branch migration complex subunit RuvB (333 aa).

The segment at 1–182 is large ATPase domain (RuvB-L); the sequence is MDERLLSGES…FGVLSRLEYY (182 aa). ATP-binding positions include leucine 21, arginine 22, glycine 63, lysine 66, threonine 67, threonine 68, 129–131, arginine 172, tyrosine 182, and arginine 219; that span reads EDF. Residue threonine 67 coordinates Mg(2+). The interval 183 to 253 is small ATPAse domain (RuvB-S); the sequence is TVDQLSAIVE…ITQMALELLQ (71 aa). The head domain (RuvB-H) stretch occupies residues 256 to 333; the sequence is KLGLDHIDHK…EHFGMEMPKV (78 aa). DNA contacts are provided by arginine 311 and arginine 316.

It belongs to the RuvB family. Homohexamer. Forms an RuvA(8)-RuvB(12)-Holliday junction (HJ) complex. HJ DNA is sandwiched between 2 RuvA tetramers; dsDNA enters through RuvA and exits via RuvB. An RuvB hexamer assembles on each DNA strand where it exits the tetramer. Each RuvB hexamer is contacted by two RuvA subunits (via domain III) on 2 adjacent RuvB subunits; this complex drives branch migration. In the full resolvosome a probable DNA-RuvA(4)-RuvB(12)-RuvC(2) complex forms which resolves the HJ.

It localises to the cytoplasm. The enzyme catalyses ATP + H2O = ADP + phosphate + H(+). The RuvA-RuvB-RuvC complex processes Holliday junction (HJ) DNA during genetic recombination and DNA repair, while the RuvA-RuvB complex plays an important role in the rescue of blocked DNA replication forks via replication fork reversal (RFR). RuvA specifically binds to HJ cruciform DNA, conferring on it an open structure. The RuvB hexamer acts as an ATP-dependent pump, pulling dsDNA into and through the RuvAB complex. RuvB forms 2 homohexamers on either side of HJ DNA bound by 1 or 2 RuvA tetramers; 4 subunits per hexamer contact DNA at a time. Coordinated motions by a converter formed by DNA-disengaged RuvB subunits stimulates ATP hydrolysis and nucleotide exchange. Immobilization of the converter enables RuvB to convert the ATP-contained energy into a lever motion, pulling 2 nucleotides of DNA out of the RuvA tetramer per ATP hydrolyzed, thus driving DNA branch migration. The RuvB motors rotate together with the DNA substrate, which together with the progressing nucleotide cycle form the mechanistic basis for DNA recombination by continuous HJ branch migration. Branch migration allows RuvC to scan DNA until it finds its consensus sequence, where it cleaves and resolves cruciform DNA. The sequence is that of Holliday junction branch migration complex subunit RuvB from Bacillus anthracis (strain A0248).